Here is a 178-residue protein sequence, read N- to C-terminus: Large ribosomal subunit protein uL6 (178 aa).

It belongs to the universal ribosomal protein uL6 family. In terms of assembly, part of the 50S ribosomal subunit.

Functionally, this protein binds to the 23S rRNA, and is important in its secondary structure. It is located near the subunit interface in the base of the L7/L12 stalk, and near the tRNA binding site of the peptidyltransferase center. This chain is Large ribosomal subunit protein uL6, found in Leifsonia xyli subsp. xyli (strain CTCB07).